The chain runs to 213 residues: Non-structural protein NP-1 (213 aa).

Residues 1 to 80 (MERSRSPRET…ATRKETATKK (80 aa)) form a disordered region. 2 stretches are compositionally biased toward basic and acidic residues: residues 15-33 (SRDK…ERTR) and 43-58 (AHGE…REKN).

It belongs to the Bocaparvovirus Non-structural protein NP-1 family.

It localises to the host nucleus. Required for the expression of the capsid proteins. Performs the splicing and internal polyadenylation of the viral capsid-encoding mRNA precursor, which allows its maturation and expression. Transactivates the viral promoter. This is Non-structural protein NP-1 (NP1) from Bos taurus (Bovine).